The following is a 78-amino-acid chain: Large ribosomal subunit protein bL28 (78 aa).

Belongs to the bacterial ribosomal protein bL28 family.

The sequence is that of Large ribosomal subunit protein bL28 from Proteus mirabilis (strain HI4320).